The following is a 205-amino-acid chain: Outer-membrane lipoprotein LolB (205 aa).

Residues 1-17 (MFLRHCITFTLIALLAG) form the signal peptide. A lipid anchor (N-palmitoyl cysteine) is attached at Cys18. Residue Cys18 is the site of S-diacylglycerol cysteine attachment.

The protein belongs to the LolB family. As to quaternary structure, monomer.

Its subcellular location is the cell outer membrane. In terms of biological role, plays a critical role in the incorporation of lipoproteins in the outer membrane after they are released by the LolA protein. In Pseudomonas putida (strain ATCC 47054 / DSM 6125 / CFBP 8728 / NCIMB 11950 / KT2440), this protein is Outer-membrane lipoprotein LolB.